The primary structure comprises 166 residues: Putative membrane protein 162 (166 aa).

Met1 is a topological domain (intravirion). Residues 2–22 traverse the membrane as a helical segment; the sequence is YYPAVQVLIGIILVDNFNTEF. Residues 23–166 are Virion surface-facing; that stretch reads LSSEKKNCKT…TIMGIARNIL (144 aa).

This sequence belongs to the asfivirus envelope protein p22 family.

The protein localises to the virion membrane. It is found in the host cell membrane. The protein is Putative membrane protein 162 of African swine fever virus (isolate Tick/Malawi/Lil 20-1/1983) (ASFV).